We begin with the raw amino-acid sequence, 167 residues long: Probable phospholipid hydroperoxide glutathione peroxidase (167 aa).

Cysteine 41 is a catalytic residue.

This sequence belongs to the glutathione peroxidase family.

The protein localises to the cytoplasm. The enzyme catalyses a hydroperoxy polyunsaturated fatty acid + 2 glutathione = a hydroxy polyunsaturated fatty acid + glutathione disulfide + H2O. Functionally, protects cells and enzymes from oxidative damage, by catalyzing the reduction of hydrogen peroxide, lipid peroxides and organic hydroperoxide, by glutathione. The polypeptide is Probable phospholipid hydroperoxide glutathione peroxidase (CSA) (Citrus sinensis (Sweet orange)).